The chain runs to 198 residues: Na(+)-translocating NADH-quinone reductase subunit E (198 aa).

6 helical membrane-spanning segments follow: residues 11 to 31 (SVFI…FLAV), 35 to 55 (VSTA…SVPV), 77 to 97 (FLNF…LEMI), 110 to 130 (GIFL…SFMV), 140 to 160 (VVYG…LAGI), and 176 to 196 (LGIT…FSGV).

It belongs to the NqrDE/RnfAE family. Composed of six subunits; NqrA, NqrB, NqrC, NqrD, NqrE and NqrF.

Its subcellular location is the cell inner membrane. The catalysed reaction is a ubiquinone + n Na(+)(in) + NADH + H(+) = a ubiquinol + n Na(+)(out) + NAD(+). NQR complex catalyzes the reduction of ubiquinone-1 to ubiquinol by two successive reactions, coupled with the transport of Na(+) ions from the cytoplasm to the periplasm. NqrA to NqrE are probably involved in the second step, the conversion of ubisemiquinone to ubiquinol. This chain is Na(+)-translocating NADH-quinone reductase subunit E, found in Histophilus somni (strain 129Pt) (Haemophilus somnus).